Reading from the N-terminus, the 637-residue chain is GTPase-activating protein GYP1 (637 aa).

Basic and acidic residues predominate over residues 1–17; the sequence is MGVRSAAKEMHERDHNS. Disordered stretches follow at residues 1-152 and 187-233; these read MGVR…GDRY and RTLS…NDSK. Residues 18–27 show a composition bias toward polar residues; it reads DSSSLVTSLM. The span at 28 to 45 shows a compositional bias: low complexity; sequence KSWRISSASSSKKPSLYK. Over residues 46 to 59 the composition is skewed to polar residues; the sequence is MNTTESTSLPSGYA. The residue at position 69 (Ser-69) is a Phosphoserine. Composition is skewed to polar residues over residues 79–91 and 98–107; these read QQAS…NSYS and PTLSTASNES. Positions 115-127 are enriched in basic residues; the sequence is RQHHQRHHHHQQP. Low complexity-rich tracts occupy residues 128-142 and 187-207; these read RHSS…CSNS and RTLS…MGTS. Positions 208 to 223 are enriched in polar residues; it reads AVRNSSSSFTYPQLPQ. A Phosphoserine modification is found at Ser-250. The 229-residue stretch at 280–508 folds into the Rab-GAP TBC domain; sequence GIPKIHRPVV…RMWDTYLSET (229 aa). Residues 543-564 are disordered; it reads DFQSPTTALSNMTPNNAVEDSG.

It localises to the golgi apparatus. It is found in the golgi stack. Its function is as follows. GTPase-activating protein (GAP) that stimulates specifically the intrinsic GTPase activity of Ypt/Rab-type GTPases YPT1 and YPT7. Functions on the Golgi as a negative regulator of YPT1. Functions on the vacuole as a negative regulator of YPT7. It is also active on SEC4 and YPT51. Provides a catalytic arginine (arginine finger) and glutamine (glutamine finger) in trans to accelerate the GTP hydrolysis rate of the substrate GTPase. In Saccharomyces cerevisiae (strain ATCC 204508 / S288c) (Baker's yeast), this protein is GTPase-activating protein GYP1 (GYP1).